We begin with the raw amino-acid sequence, 122 residues long: Large ribosomal subunit protein uL14 (122 aa).

Belongs to the universal ribosomal protein uL14 family. As to quaternary structure, part of the 50S ribosomal subunit. Forms a cluster with proteins L3 and L19. In the 70S ribosome, L14 and L19 interact and together make contacts with the 16S rRNA in bridges B5 and B8.

Binds to 23S rRNA. Forms part of two intersubunit bridges in the 70S ribosome. The protein is Large ribosomal subunit protein uL14 of Pseudomonas paraeruginosa (strain DSM 24068 / PA7) (Pseudomonas aeruginosa (strain PA7)).